We begin with the raw amino-acid sequence, 157 residues long: Transcription elongation factor GreA (157 aa).

The protein belongs to the GreA/GreB family.

Its function is as follows. Necessary for efficient RNA polymerase transcription elongation past template-encoded arresting sites. The arresting sites in DNA have the property of trapping a certain fraction of elongating RNA polymerases that pass through, resulting in locked ternary complexes. Cleavage of the nascent transcript by cleavage factors such as GreA or GreB allows the resumption of elongation from the new 3'terminus. GreA releases sequences of 2 to 3 nucleotides. In Bartonella tribocorum (strain CIP 105476 / IBS 506), this protein is Transcription elongation factor GreA.